The primary structure comprises 382 residues: Queuine tRNA-ribosyltransferase (382 aa).

Catalysis depends on Asp93, which acts as the Proton acceptor. Substrate contacts are provided by residues 93–97, Asp147, Gln191, and Gly218; that span reads DSGGF. The segment at 249 to 255 is RNA binding; that stretch reads GVGKPED. Asp268 functions as the Nucleophile in the catalytic mechanism. An RNA binding; important for wobble base 34 recognition region spans residues 273-277; that stretch reads TRNAR. Positions 306, 308, 311, and 337 each coordinate Zn(2+).

This sequence belongs to the queuine tRNA-ribosyltransferase family. Homodimer. Within each dimer, one monomer is responsible for RNA recognition and catalysis, while the other monomer binds to the replacement base PreQ1. Requires Zn(2+) as cofactor.

The catalysed reaction is 7-aminomethyl-7-carbaguanine + guanosine(34) in tRNA = 7-aminomethyl-7-carbaguanosine(34) in tRNA + guanine. The protein operates within tRNA modification; tRNA-queuosine biosynthesis. In terms of biological role, catalyzes the base-exchange of a guanine (G) residue with the queuine precursor 7-aminomethyl-7-deazaguanine (PreQ1) at position 34 (anticodon wobble position) in tRNAs with GU(N) anticodons (tRNA-Asp, -Asn, -His and -Tyr). Catalysis occurs through a double-displacement mechanism. The nucleophile active site attacks the C1' of nucleotide 34 to detach the guanine base from the RNA, forming a covalent enzyme-RNA intermediate. The proton acceptor active site deprotonates the incoming PreQ1, allowing a nucleophilic attack on the C1' of the ribose to form the product. After dissociation, two additional enzymatic reactions on the tRNA convert PreQ1 to queuine (Q), resulting in the hypermodified nucleoside queuosine (7-(((4,5-cis-dihydroxy-2-cyclopenten-1-yl)amino)methyl)-7-deazaguanosine). This is Queuine tRNA-ribosyltransferase from Haemophilus influenzae (strain PittEE).